Consider the following 730-residue polypeptide: MASKKHVVCQSCDINCVVEAEVKADGKIQTKSISEPHPTTPPNSICMKSVNADTIRTHKDRVLYPLKNVGSKRGEQRWERISWDQALDEIAEKLKKIIAKYGPESLGVSQTEINQQSEYGTLRRFMNLLGSPNWTSAMYMCIGNTAGVHRVTHGSYSFASFADSNCLLFIGKNLSNHNWVSQFNDLKAALKRGCKLIVLDPRRTKVAEMADIWLPLRYGTDAALFLGMINVIINEQLYDKEFVENWCVGFEELKERVQEYPLDKVAEITGCDAGEIRKAAVMFATESPASIPWAVSTDMQKNSCSAIRAQCILRAIVGSFVNGAEILGAPHSDLVPISKIQMHEALPEEKKKLQLGTETYPFLTYTGMSALEEPSERVYGVKYFHNMGAFMANPTALFTAMATEKPYPVKAFFALASNALMGYANQQNALKGLMNQDLVVCYDQFMTPTAQLADYVLPGDHWLERPVVQPNWEGIPFGNTSQQVVEPAGEAKDEYYFIRELAVRMGLEEHFPWKDRLELINYRISPTGMEWEEYQKQYTYMSKLPDYFGPEGVGVATPSGKVELYSSVFEKLGYDPLPYYHEPLQTEISDPELAKEYPLILFAGLREDSNFQSCYHQPGILRDAEPDPVALLHPKTAQSLGLPSGEWIWVETTHGRLKLLLKHDGAQPEGTIRIPHGRWCPEQEGGPETGFSGAMLHNDAMVLSDDDWNLDPEQGLPNLRGGILAKAYKC.

Residues Cys-9 and Cys-12 each coordinate [4Fe-4S] cluster. Asp-13 is a catalytic residue. 2 residues coordinate [4Fe-4S] cluster: Cys-16 and Cys-46. W-bis(molybdopterin guanine dinucleotide) is bound by residues Lys-48, 111–114, Cys-141, 172–173, 177–179, 199–202, 218–221, Ser-296, Gln-300, 416–418, 422–423, 442–444, Asp-460, Arg-465, 602–613, Arg-606, His-676, Asp-699, and Arg-720; these read TEIN, KN, HNW, LDPR, YGTD, ASN, GY, YDQ, and FAGLREDSNFQS.

The protein belongs to the prokaryotic molybdopterin-containing oxidoreductase family. As to quaternary structure, monomer. [4Fe-4S] cluster serves as cofactor. W-bis(molybdopterin guanine dinucleotide) is required as a cofactor.

The catalysed reaction is acetaldehyde = acetylene + H2O. In terms of biological role, catalyzes the hydration of acetylene to form acetaldehyde. Ethylene cannot act as a substrate. This chain is Acetylene hydratase, found in Syntrophotalea acetylenica (Pelobacter acetylenicus).